Here is a 375-residue protein sequence, read N- to C-terminus: E3 ubiquitin-protein ligase FANCL (375 aa).

A2 is subject to N-acetylalanine. The interval 104–294 (LPPPPQFYSS…KDVLEIDFPA (191 aa)) is UBC-RWD region (URD). Zn(2+)-binding residues include C307, C310, C324, C329, H334, C337, C359, and C362. The RING-type; degenerate zinc finger occupies 307 to 363 (CGICYAYQLDGTIPDQVCDNSQCGQPFHQICLYEWLRGLLTSRQSFNIIFGECPYCS).

Interacts with GGN. Belongs to the multisubunit FA complex composed of FANCA, FANCB, FANCC, FANCE, FANCF, FANCG, FANCL/PHF9 and FANCM. The complex is not found in FA patients. In complex with FANCF, FANCA and FANCG, but not with FANCC, nor FANCE, interacts with HES1; this interaction may be essential for the stability and nuclear localization of FA core complex proteins. Interacts with FANCI. Directly interacts (via the RING-type zinc finger) with UBE2T and UBE2W. In terms of processing, the RING-type zinc finger domain is monoubiquitinated in the presence of UBE2T and UBE2W.

The protein localises to the cytoplasm. It localises to the nucleus. It catalyses the reaction S-ubiquitinyl-[E2 ubiquitin-conjugating enzyme]-L-cysteine + [acceptor protein]-L-lysine = [E2 ubiquitin-conjugating enzyme]-L-cysteine + N(6)-ubiquitinyl-[acceptor protein]-L-lysine.. Its pathway is protein modification; protein ubiquitination. Ubiquitin ligase protein that mediates monoubiquitination of FANCD2 in the presence of UBE2T, a key step in the DNA damage pathway. Also mediates monoubiquitination of FANCI. May stimulate the ubiquitin release from UBE2W. May be required for proper primordial germ cell proliferation in the embryonic stage, whereas it is probably not needed for spermatogonial proliferation after birth. This chain is E3 ubiquitin-protein ligase FANCL (FANCL), found in Homo sapiens (Human).